Reading from the N-terminus, the 138-residue chain is Putative nickel-responsive regulator (138 aa).

Ni(2+)-binding residues include histidine 80, histidine 91, histidine 93, and cysteine 99.

The protein belongs to the transcriptional regulatory CopG/NikR family. Requires Ni(2+) as cofactor.

Functionally, transcriptional regulator. This chain is Putative nickel-responsive regulator, found in Campylobacter hominis (strain ATCC BAA-381 / DSM 21671 / CCUG 45161 / LMG 19568 / NCTC 13146 / CH001A).